Here is a 189-residue protein sequence, read N- to C-terminus: dCTP deaminase, dUMP-forming (189 aa).

Residues 101–106 (KSSLGR), Asp-119, 127–129 (TLE), Gln-148, Tyr-162, Lys-170, and Gln-174 each bind dCTP. The Proton donor/acceptor role is filled by Glu-129. The segment at 163 to 189 (GSGKLGSKYQGQRGPTPSKAYLNFPNK) is disordered.

This sequence belongs to the dCTP deaminase family. In terms of assembly, homotrimer.

It catalyses the reaction dCTP + 2 H2O = dUMP + NH4(+) + diphosphate. It participates in pyrimidine metabolism; dUMP biosynthesis; dUMP from dCTP: step 1/1. Bifunctional enzyme that catalyzes both the deamination of dCTP to dUTP and the hydrolysis of dUTP to dUMP without releasing the toxic dUTP intermediate. This Corynebacterium glutamicum (strain R) protein is dCTP deaminase, dUMP-forming.